Consider the following 335-residue polypeptide: Dye-decolorizing peroxidase (335 aa).

Asp149 functions as the Proton acceptor in the catalytic mechanism. His222 is a binding site for heme. The interval 312-335 (LPQAATPTLAAGSLSIGSLKGSPR) is targeting peptide.

Belongs to the DyP-type peroxidase family. In terms of assembly, homotetramer, presumably also in the encapsulin nanocompartment. Heme b serves as cofactor.

Its subcellular location is the encapsulin nanocompartment. It carries out the reaction 2 a phenolic donor + H2O2 = 2 a phenolic radical donor + 2 H2O. In terms of biological role, cargo of a type 1 encapsulin nanocompartment in situ; this cargo protects against oxidative stress at low pH. When expressed in the cytoplasm (absence of the encapsulin shell gene) it is almost as protective as the intact nanocompartment; its encapsulation has a modest yet significant effect on protection against oxidative stress at low pH. A heme-dependent peroxidase, it probably does not have deferrochelatase activity. Converts guaiacol and H2O2 to tetraguaiacol, also acts on 2,2'-azino-bis(3-ethylbenzothiazoline-6-sulfonic acid) (ABTS). Retains peroxidase activity when encapsulated but has a reduced set of substrates; acts on ABTS but not guaiacol. The polypeptide is Dye-decolorizing peroxidase (Mycobacterium tuberculosis (strain ATCC 25618 / H37Rv)).